The chain runs to 122 residues: Chorismate mutase AroH (122 aa).

Residues 2–120 (VRGIRGAITV…AVRLRPDLES (119 aa)) form the Chorismate mutase aroH-type domain. Residues Arg6, Arg89, and Tyr107 each contribute to the prephenate site.

As to quaternary structure, homotrimer.

It localises to the cytoplasm. It catalyses the reaction chorismate = prephenate. Its pathway is metabolic intermediate biosynthesis; prephenate biosynthesis; prephenate from chorismate: step 1/1. With respect to regulation, inhibited by 40% with 500 uM tyrosine, and a tyrosine concentration as high as 5 mM reduced activity to 5%. Catalyzes the Claisen rearrangement of chorismate to prephenate. Probably involved in the aromatic amino acid biosynthesis. This Thermus thermophilus protein is Chorismate mutase AroH.